A 291-amino-acid polypeptide reads, in one-letter code: 33 kDa chaperonin (291 aa).

2 disulfides stabilise this stretch: cysteine 235–cysteine 237 and cysteine 268–cysteine 271.

The protein belongs to the HSP33 family. In terms of processing, under oxidizing conditions two disulfide bonds are formed involving the reactive cysteines. Under reducing conditions zinc is bound to the reactive cysteines and the protein is inactive.

The protein localises to the cytoplasm. In terms of biological role, redox regulated molecular chaperone. Protects both thermally unfolding and oxidatively damaged proteins from irreversible aggregation. Plays an important role in the bacterial defense system toward oxidative stress. The protein is 33 kDa chaperonin of Streptococcus agalactiae serotype III (strain NEM316).